The primary structure comprises 347 residues: A-type ATP synthase subunit C (347 aa).

This sequence belongs to the V-ATPase V0D/AC39 subunit family. As to quaternary structure, has multiple subunits with at least A(3), B(3), C, D, E, F, H, I and proteolipid K(x).

It localises to the cell membrane. Functionally, component of the A-type ATP synthase that produces ATP from ADP in the presence of a proton gradient across the membrane. The chain is A-type ATP synthase subunit C from Haloquadratum walsbyi (strain DSM 16790 / HBSQ001).